The primary structure comprises 219 residues: Isovaleryl-homoserine lactone synthase (219 aa).

Belongs to the autoinducer synthase family.

It catalyses the reaction 3-methylbutanoyl-CoA + S-adenosyl-L-methionine = N-isovaleryl-L-homoserine lactone + S-methyl-5'-thioadenosine + CoA + H(+). Its function is as follows. Catalyzes the synthesis of IV-HSL (isovaleryl-homoserine lactone), a quorum-sensing (QS) autoinducer molecule which binds to BjaR1 transcriptional regulator to activate expression of QS-dependent genes. Is active with isovaleryl-CoA but cannot use isovaleryl-ACP as acyl donor. The chain is Isovaleryl-homoserine lactone synthase (bjaI) from Bradyrhizobium diazoefficiens (strain JCM 10833 / BCRC 13528 / IAM 13628 / NBRC 14792 / USDA 110).